We begin with the raw amino-acid sequence, 261 residues long: tRNA pseudouridine synthase A (261 aa).

Aspartate 51 serves as the catalytic Nucleophile. Tyrosine 109 provides a ligand contact to substrate.

This sequence belongs to the tRNA pseudouridine synthase TruA family. In terms of assembly, homodimer.

It catalyses the reaction uridine(38/39/40) in tRNA = pseudouridine(38/39/40) in tRNA. Formation of pseudouridine at positions 38, 39 and 40 in the anticodon stem and loop of transfer RNAs. The sequence is that of tRNA pseudouridine synthase A from Shewanella sp. (strain MR-4).